The chain runs to 945 residues: Glutamyl aminopeptidase (945 aa).

The Cytoplasmic segment spans residues 1–18; that stretch reads MNFAEEEPSKKYCIKGKH. A helical; Signal-anchor for type II membrane protein membrane pass occupies residues 19 to 39; it reads VAIICATVVAVGLIVGLSVGL. Residues 40–945 are Extracellular-facing; the sequence is TRSCEPGTTP…SISEWFTSMP (906 aa). Residues 45 to 77 form a disordered region; it reads PGTTPAPSNPPPHTSTALPPQDQNVCPDSDDES. N116 and N189 each carry an N-linked (GlcNAc...) asparagine glycan. E215 contacts substrate. 2 N-linked (GlcNAc...) asparagine glycosylation sites follow: N236 and N316. Substrate is bound at residue 349-353; it reads GAMEN. H385 provides a ligand contact to Zn(2+). The Proton acceptor role is filled by E386. The Zn(2+) site is built by H389 and E408. N546, N584, N601, N640, N669, N754, N766, and N792 each carry an N-linked (GlcNAc...) asparagine glycan. Residue R878 participates in substrate binding.

The protein belongs to the peptidase M1 family. As to quaternary structure, homodimer; disulfide-linked. Requires Zn(2+) as cofactor. In terms of tissue distribution, highest expression in kidney proximal tubules and ileum enterocytes. High expression also detected in liver and pituitary. Lower levels in heart, adrenal gland and brain. Not detected in aorta, lung or spleen. In heart, higher levels in ventricle than in atrium. Also expressed in glomerular mesangial cells.

Its subcellular location is the cell membrane. It catalyses the reaction Release of N-terminal glutamate (and to a lesser extent aspartate) from a peptide.. Substrate specificity is modulated by calcium which enhances the enzymatic activity for cleavage of acidic residues while reducing its activity with basic residues. Inhibited by aminopeptidase inhibitors amastatin and bestatin. Functionally, regulates central hypertension through its calcium-modulated preference to cleave N-terminal acidic residues from peptides such as angiotensin II. The protein is Glutamyl aminopeptidase (Enpep) of Rattus norvegicus (Rat).